The sequence spans 121 residues: Small ribosomal subunit protein uS13 (121 aa).

Residues 89–121 (MRHRRGLPVRGQHTKNNARTRKGKKVSIAGRKK) are disordered.

This sequence belongs to the universal ribosomal protein uS13 family. Part of the 30S ribosomal subunit. Forms a loose heterodimer with protein S19. Forms two bridges to the 50S subunit in the 70S ribosome.

Its function is as follows. Located at the top of the head of the 30S subunit, it contacts several helices of the 16S rRNA. In the 70S ribosome it contacts the 23S rRNA (bridge B1a) and protein L5 of the 50S subunit (bridge B1b), connecting the 2 subunits; these bridges are implicated in subunit movement. Contacts the tRNAs in the A and P-sites. This chain is Small ribosomal subunit protein uS13, found in Pediococcus pentosaceus (strain ATCC 25745 / CCUG 21536 / LMG 10740 / 183-1w).